Here is a 161-residue protein sequence, read N- to C-terminus: Allophycocyanin subunit alpha-B (161 aa).

Asn71 is subject to N4-methylasparagine. Residue Cys81 coordinates (2R,3E)-phycocyanobilin.

This sequence belongs to the phycobiliprotein family. In terms of assembly, heterohexamer of two alpha chains, one alpha-B chain and three beta chains. Post-translationally, contains one covalently linked phycocyanobilin chromophore. The chromophore is added by phycocyanobilin lyase CpcS 1.

The protein localises to the cellular thylakoid membrane. Functionally, light-harvesting photosynthetic bile pigment-protein from the phycobiliprotein complex. Allophycocyanin has a maximum absorption at approximately 654 nanometers. The protein is Allophycocyanin subunit alpha-B (apcD) of Nostoc sp. (strain PCC 7120 / SAG 25.82 / UTEX 2576).